Reading from the N-terminus, the 68-residue chain is Large ribosomal subunit protein uL29 (68 aa).

The protein belongs to the universal ribosomal protein uL29 family.

The chain is Large ribosomal subunit protein uL29 from Picosynechococcus sp. (strain ATCC 27264 / PCC 7002 / PR-6) (Agmenellum quadruplicatum).